The chain runs to 1153 residues: Cytosolic carboxypeptidase 1 (1153 aa).

The disordered stretch occupies residues 357–400; it reads NQPPGVDDVVDESDENEATEVDTENDTENEEDDTGHKTQNDDIE. Acidic residues predominate over residues 364–389; the sequence is DVVDESDENEATEVDTENDTENEEDD. The region spanning 774–1063 is the Peptidase M14 domain; that stretch reads YPYTYSMLKM…QFCLALLRLR (290 aa). Zn(2+) is bound by residues His-845, Glu-848, and His-942. Glu-1027 acts as the Proton donor/acceptor in catalysis. Positions 1108–1128 are enriched in acidic residues; sequence AFLEEVDYSAESNDENDPELE. Residues 1108–1153 form a disordered region; the sequence is AFLEEVDYSAESNDENDPELEPDLRDNHALPDPSSDSELSHQDSLT. The span at 1141–1153 shows a compositional bias: polar residues; the sequence is SSDSELSHQDSLT.

Belongs to the peptidase M14 family. Requires Zn(2+) as cofactor.

The protein localises to the cytoplasm. Its subcellular location is the cytosol. The protein resides in the nucleus. It is found in the mitochondrion. It carries out the reaction (L-glutamyl)(n+1)-gamma-L-glutamyl-L-glutamyl-[protein] + H2O = (L-glutamyl)(n)-gamma-L-glutamyl-L-glutamyl-[protein] + L-glutamate. It catalyses the reaction C-terminal L-alpha-aminoacyl-L-glutamyl-L-glutamyl-[tubulin] + H2O = C-terminal L-alpha-aminoacyl-L-glutamyl-[tubulin] + L-glutamate. In terms of biological role, metallocarboxypeptidase that mediates protein deglutamylation of tubulin and non-tubulin target proteins. Catalyzes the removal of polyglutamate side chains present on the gamma-carboxyl group of glutamate residues within the C-terminal tail of alpha- and beta-tubulin. Specifically cleaves tubulin long-side-chains, while it is not able to remove the branching point glutamate. Also catalyzes the removal of polyglutamate residues from the carboxy-terminus of alpha-tubulin as well as non-tubulin proteins. This Danio rerio (Zebrafish) protein is Cytosolic carboxypeptidase 1 (agtpbp1).